The chain runs to 137 residues: Small ribosomal subunit protein uS12 (137 aa).

Residue Asp-102 is modified to 3-methylthioaspartic acid.

It belongs to the universal ribosomal protein uS12 family. Part of the 30S ribosomal subunit. Contacts proteins S8 and S17. May interact with IF1 in the 30S initiation complex.

In terms of biological role, with S4 and S5 plays an important role in translational accuracy. Its function is as follows. Interacts with and stabilizes bases of the 16S rRNA that are involved in tRNA selection in the A site and with the mRNA backbone. Located at the interface of the 30S and 50S subunits, it traverses the body of the 30S subunit contacting proteins on the other side and probably holding the rRNA structure together. The combined cluster of proteins S8, S12 and S17 appears to hold together the shoulder and platform of the 30S subunit. This Phytoplasma mali (strain AT) protein is Small ribosomal subunit protein uS12.